The primary structure comprises 306 residues: Curved DNA-binding protein (306 aa).

The J domain occupies 5 to 69 (DYYAIMGVKP…QRRAEYDQMW (65 aa)).

It localises to the cytoplasm. Its subcellular location is the nucleoid. DNA-binding protein that preferentially recognizes a curved DNA sequence. It is probably a functional analog of DnaJ; displays overlapping activities with DnaJ, but functions under different conditions, probably acting as a molecular chaperone in an adaptive response to environmental stresses other than heat shock. Lacks autonomous chaperone activity; binds native substrates and targets them for recognition by DnaK. Its activity is inhibited by the binding of CbpM. This chain is Curved DNA-binding protein, found in Shigella boydii serotype 18 (strain CDC 3083-94 / BS512).